Reading from the N-terminus, the 483-residue chain is Altronate oxidoreductase (483 aa).

18-29 provides a ligand contact to NAD(+); that stretch reads IIQFGEGNFLRA.

It belongs to the mannitol dehydrogenase family. UxaB subfamily.

It catalyses the reaction D-altronate + NAD(+) = keto-D-tagaturonate + NADH + H(+). Its pathway is carbohydrate metabolism; pentose and glucuronate interconversion. This Yersinia enterocolitica serotype O:8 / biotype 1B (strain NCTC 13174 / 8081) protein is Altronate oxidoreductase.